An 880-amino-acid polypeptide reads, in one-letter code: Tyrosine-protein kinase receptor TYRO3 (880 aa).

A signal peptide spans 1 to 30; it reads MALRRSMGWPGLRPLLLAGLASLLLPGSAA. Ig-like C2-type domains follow at residues 31 to 118 and 129 to 209; these read AGLK…TKIS and PFFT…PAIV. At 31–419 the chain is on the extracellular side; that stretch reads AGLKLMGAPV…QGPPHSRTSW (389 aa). N-linked (GlcNAc...) asparagine glycans are attached at residues Asn-53, Asn-75, Asn-181, Asn-220, Asn-230, Asn-283, Asn-356, and Asn-370. Cystine bridges form between Cys-54/Cys-107 and Cys-150/Cys-193. Fibronectin type-III domains follow at residues 217-310 and 315-406; these read APFN…TKGL and APQN…SHDH. A helical membrane pass occupies residues 420-440; sequence VPVVLGVLTALITAAALALIL. At 441–880 the chain is on the cytoplasmic side; sequence LRKRRKETRF…QQGLLPHSSC (440 aa). The residue at position 456 (Ser-456) is a Phosphoserine. In terms of domain architecture, Protein kinase spans 508-785; the sequence is FTLGRMLGKG…LENILGHLSV (278 aa). Residues 514–522 and Lys-540 contribute to the ATP site; that span reads LGKGEFGSV. The active-site Proton acceptor is the Asp-645. Phosphotyrosine; by autocatalysis is present on residues Tyr-671, Tyr-675, Tyr-676, and Tyr-794. The segment at 800–864 is disordered; the sequence is AEQPTESGSP…QQPESPLNEN (65 aa). Ser-808 and Ser-859 each carry phosphoserine. Residues 849 to 864 show a composition bias toward polar residues; it reads SPGQLEQQPESPLNEN.

This sequence belongs to the protein kinase superfamily. Tyr protein kinase family. AXL/UFO subfamily. Monomer and homodimer. Interacts (via N-terminus) with extracellular ligands TULP1 and GAS6. Interacts with PIK3R1; this interaction increases PI3-kinase activity. Post-translationally, autophosphorylated. As to expression, abundant in the brain and lower levels in other tissues.

The protein localises to the cell membrane. It catalyses the reaction L-tyrosyl-[protein] + ATP = O-phospho-L-tyrosyl-[protein] + ADP + H(+). Its function is as follows. Receptor tyrosine kinase that transduces signals from the extracellular matrix into the cytoplasm by binding to several ligands including TULP1 or GAS6. Regulates many physiological processes including cell survival, migration and differentiation. Ligand binding at the cell surface induces dimerization and autophosphorylation of TYRO3 on its intracellular domain that provides docking sites for downstream signaling molecules. Following activation by ligand, interacts with PIK3R1 and thereby enhances PI3-kinase activity. Activates the AKT survival pathway, including nuclear translocation of NF-kappa-B and up-regulation of transcription of NF-kappa-B-regulated genes. TYRO3 signaling plays a role in various processes such as neuron protection from excitotoxic injury, platelet aggregation and cytoskeleton reorganization. Also plays an important role in inhibition of Toll-like receptors (TLRs)-mediated innate immune response by activating STAT1, which selectively induces production of suppressors of cytokine signaling SOCS1 and SOCS3. This is Tyrosine-protein kinase receptor TYRO3 (Tyro3) from Mus musculus (Mouse).